A 608-amino-acid polypeptide reads, in one-letter code: ABC transporter ATP-binding protein RamB (608 aa).

The next 5 membrane-spanning stretches (helical) occupy residues 25 to 45 (GVLVRLALWSLAESGQAFLVG), 66 to 86 (LWLGVALVAVLSGARVVRGVF), 141 to 161 (GLVLTLRSFVFTAAGALLGLL), 166 to 186 (ALLVVVLPPLAAGLALFLVTL), and 253 to 273 (AALGVAGHLPVLALLVAVEWL). The ABC transmembrane type-1 domain maps to 30-296 (LALWSLAESG…FTYLVQSLLP (267 aa)). A disordered region spans residues 321–362 (GPEPEPEPEPEPEPEPELGSGLEPEPEPASEPESGPSTASAS). Residues 324-336 (PEPEPEPEPEPEP) are compositionally biased toward acidic residues. The segment covering 351-362 (EPESGPSTASAS) has biased composition (low complexity). One can recognise an ABC transporter domain in the interval 376-605 (VELRSVTLSY…SPLYRDLTGH (230 aa)). 410 to 417 (GPSGIGKS) is an ATP binding site.

The protein belongs to the ABC transporter superfamily.

The protein localises to the cell membrane. Functionally, probably involved in exporting SapB from the cell. Expression of the ram locus (ramA, ramB and ramR) induces rapid aerial mycelium formation in S.lividans. In Streptomyces coelicolor (strain ATCC BAA-471 / A3(2) / M145), this protein is ABC transporter ATP-binding protein RamB.